A 320-amino-acid chain; its full sequence is Cytochrome f (320 aa).

Residues 1-35 (MQTRKTFSWIKEQIARSISVSLLIYIITRTSISSA) form the signal peptide. Heme-binding residues include Tyr36, Cys56, Cys59, and His60. A helical transmembrane segment spans residues 286–306 (VQGLLFFLASVILAQIFLVLK).

Belongs to the cytochrome f family. In terms of assembly, the 4 large subunits of the cytochrome b6-f complex are cytochrome b6, subunit IV (17 kDa polypeptide, petD), cytochrome f and the Rieske protein, while the 4 small subunits are PetG, PetL, PetM and PetN. The complex functions as a dimer. It depends on heme as a cofactor.

Its subcellular location is the plastid. It is found in the chloroplast thylakoid membrane. In terms of biological role, component of the cytochrome b6-f complex, which mediates electron transfer between photosystem II (PSII) and photosystem I (PSI), cyclic electron flow around PSI, and state transitions. The polypeptide is Cytochrome f (Jasminum nudiflorum (Winter jasmine)).